A 283-amino-acid polypeptide reads, in one-letter code: uncharacterized protein (283 aa).

4 helical membrane-spanning segments follow: residues 11 to 31 (LFAY…YVSA), 35 to 55 (EGAL…WFGP), 56 to 76 (IYAL…MMFF), and 93 to 113 (LVVW…IHDI). In terms of domain architecture, GGDEF spans 162 to 283 (NSFVFLLLHM…LENEMMMNEL (122 aa)).

The protein resides in the cell membrane. This is an uncharacterized protein from Bacillus subtilis (strain 168).